A 178-amino-acid chain; its full sequence is Caveolin-1 (178 aa).

S2 carries the post-translational modification N-acetylserine. S2 is modified (phosphoserine). Positions 2–94 are required for homooligomerization; sequence SGGKYVDSEG…WKASFTTFTV (93 aa). Topologically, residues 2-104 are cytoplasmic; that stretch reads SGGKYVDSEG…TKYWFYRLLS (103 aa). K5 carries the post-translational modification N6-acetyllysine; alternate. K5 participates in a covalent cross-link: Glycyl lysine isopeptide (Lys-Gly) (interchain with G-Cter in ubiquitin); alternate. Y6 is modified (phosphotyrosine). A Phosphoserine modification is found at S9. Y14 bears the Phosphotyrosine; by ABL1 mark. Y25 is subject to Phosphotyrosine. Glycyl lysine isopeptide (Lys-Gly) (interchain with G-Cter in ubiquitin) cross-links involve residues K26, K30, K39, K47, and K57. Residues 82–94 are interaction with CAVIN3; the sequence is DGIWKASFTTFTV. Residues 105 to 125 constitute an intramembrane region (helical); that stretch reads TIFGIPMALIWGIYFAILSFL. The Cytoplasmic segment spans residues 126–178; the sequence is HIWAVVPCIKSFLIEIQCISRVYSIYVHTFCDPLFEAIGKIFSNVRISMQKEI. An interacts with SPRY1, SPRY2, SPRY3 and SPRY4 region spans residues 131–142; sequence VPCIKSFLIEIQ. Residues C133, C143, and C156 are each lipidated (S-palmitoyl cysteine). The tract at residues 149-160 is interacts with SPRY1, SPRY2, and SPRY4; it reads SIYVHTFCDPLF. The tract at residues 167 to 178 is interacts with SPRY1, SPRY2, SPRY3 and SPRY4; that stretch reads FSNVRISMQKEI.

This sequence belongs to the caveolin family. In terms of assembly, homooligomer. Interacts with GLIPR2. Interacts with NOSTRIN. Interacts with SNAP25 and STX1A. Interacts (via the N-terminus) with DPP4; the interaction is direct. Interacts with CTNNB1, CDH1 and JUP. Interacts with PACSIN2; this interaction induces membrane tubulation. Interacts with SLC7A9. Interacts with BMX and BTK. Interacts with TGFBR1. Interacts with CAVIN3 (via leucine-zipper domain) in a cholesterol-sensitive manner. Interacts with CAVIN1. Interacts with EHD2 in a cholesterol-dependent manner. Forms a ternary complex with UBXN6 and VCP; mediates CAV1 targeting to lysosomes for degradation. Interacts with ABCG1; this interaction regulates ABCG1-mediated cholesterol efflux. Interacts with NEU3; this interaction enhances NEU3 sialidase activity within caveola. Interacts (via C-terminus) with SPRY1, SPRY2 (via C-terminus), SPRY3, and SPRY4. Interacts with IGFBP5; this interaction allows trafficking of IGFBP5 from the plasma membrane to the nucleus. Post-translationally, phosphorylated at Tyr-14 by ABL1 in response to oxidative stress. Ubiquitinated. Undergo monoubiquitination and multi- and/or polyubiquitination. Monoubiquitination of N-terminal lysines promotes integration in a ternary complex with UBXN6 and VCP which promotes oligomeric CAV1 targeting to lysosomes for degradation. Ubiquitinated by ZNRF1; leading to degradation and modulation of the TLR4-mediated immune response.

It localises to the golgi apparatus membrane. The protein localises to the cell membrane. The protein resides in the membrane. Its subcellular location is the caveola. It is found in the membrane raft. In terms of biological role, may act as a scaffolding protein within caveolar membranes. Forms a stable heterooligomeric complex with CAV2 that targets to lipid rafts and drives caveolae formation. Mediates the recruitment of CAVIN proteins (CAVIN1/2/3/4) to the caveolae. Interacts directly with G-protein alpha subunits and can functionally regulate their activity. Involved in the costimulatory signal essential for T-cell receptor (TCR)-mediated T-cell activation. Its binding to DPP4 induces T-cell proliferation and NF-kappa-B activation in a T-cell receptor/CD3-dependent manner. Recruits CTNNB1 to caveolar membranes and may regulate CTNNB1-mediated signaling through the Wnt pathway. Negatively regulates TGFB1-mediated activation of SMAD2/3 by mediating the internalization of TGFBR1 from membrane rafts leading to its subsequent degradation. Binds 20(S)-hydroxycholesterol (20(S)-OHC). This chain is Caveolin-1 (CAV1), found in Oryctolagus cuniculus (Rabbit).